Consider the following 837-residue polypeptide: V-type proton ATPase 116 kDa subunit a 1 (837 aa).

Residues 1-388 lie on the Cytoplasmic side of the membrane; it reads MGELFRSEEM…DAYGIGTYRE (388 aa). Phosphothreonine is present on residues Thr-250 and Thr-360. Tyr-364 carries the phosphotyrosine modification. Residues 389–407 form a helical membrane-spanning segment; the sequence is INPAPYTIITFPFLFAVMF. Topologically, residues 408 to 409 are vacuolar; sequence GD. A helical membrane pass occupies residues 410 to 426; sequence FGHGILMTLFAVWMVLR. The Cytoplasmic portion of the chain corresponds to 427–441; the sequence is ESRILSQKNENEMFS. The helical transmembrane segment at 442 to 471 threads the bilayer; it reads TVFSGRYIILLMGVFSMYTGLIYNDCFSKS. The Vacuolar portion of the chain corresponds to 472–534; the sequence is LNIFGSSWSV…ATNKLTFLNS (63 aa). A helical transmembrane segment spans residues 535–554; that stretch reads FKMKMSVILGIIHMLFGVSL. Residues 555-572 are Cytoplasmic-facing; the sequence is SLFNHIYFKKPLNIYFGF. Residues 573–593 traverse the membrane as a helical segment; that stretch reads IPEIIFMTSLFGYLVILIFYK. The Vacuolar portion of the chain corresponds to 594–638; that stretch reads WTAYDAHTSENAPSLLIHFINMFLFSYPESGYSMLYSGQKGIQCF. The helical transmembrane segment at 639–658 threads the bilayer; sequence LVVVALLCVPWMLLFKPLVL. Residues 659–724 lie on the Cytoplasmic side of the membrane; that stretch reads RRQYLRRKHL…ATMVHQAIHT (66 aa). A helical transmembrane segment spans residues 725 to 749; that stretch reads IEYCLGCISNTASYLRLWALSLAHA. Residues 750-770 lie on the Vacuolar side of the membrane; sequence QLSEVLWTMVIHIGLSVKSLA. Residues 771-809 traverse the membrane as a helical segment; that stretch reads GGLVLFFFFTAFATLTVAILLIMEGLSAFLHALRLHWVE. Residues 810-837 lie on the Cytoplasmic side of the membrane; that stretch reads FQNKFYSGTGFKFLPFSFEHIREGKFGE.

Belongs to the V-ATPase 116 kDa subunit family. As to quaternary structure, V-ATPase is a heteromultimeric enzyme made up of two complexes: the ATP-hydrolytic V1 complex and the proton translocation V0 complex. The V1 complex consists of three catalytic AB heterodimers that form a heterohexamer, three peripheral stalks each consisting of EG heterodimers, one central rotor including subunits D and F, and the regulatory subunits C and H. The proton translocation complex V0 consists of the proton transport subunit a, a ring of proteolipid subunits c9c'', rotary subunit d, subunits e and f, and the accessory subunits ATP6AP1/Ac45 and ATP6AP2/PRR. Interacts with SPAAR.

It is found in the cytoplasmic vesicle. It localises to the clathrin-coated vesicle membrane. The protein resides in the secretory vesicle. Its subcellular location is the synaptic vesicle membrane. The protein localises to the melanosome. Subunit of the V0 complex of vacuolar(H+)-ATPase (V-ATPase), a multisubunit enzyme composed of a peripheral complex (V1) that hydrolyzes ATP and a membrane integral complex (V0) that translocates protons. V-ATPase is responsible for the acidification of various organelles, such as lysosomes, endosomes, the trans-Golgi network, and secretory granules, including synaptic vesicles. In certain cell types, can be exported to the plasma membrane, where it is involved in the acidification of the extracellular environment. Required for assembly and activity of the vacuolar ATPase. Through its action on compartment acidification, plays an essential role in neuronal development in terms of integrity and connectivity of neurons. This chain is V-type proton ATPase 116 kDa subunit a 1 (ATP6V0A1), found in Pongo abelii (Sumatran orangutan).